We begin with the raw amino-acid sequence, 280 residues long: Aquaporin PIP2-7 (280 aa).

Met-1 is subject to N-acetylmethionine. The Cytoplasmic portion of the chain corresponds to 1-38; sequence MSKEVSEEGKTHHGKDYVDPPPAPLLDMGELKSWSFYR. N6,N6-dimethyllysine is present on Lys-3. Residues 39 to 59 traverse the membrane as a helical segment; it reads ALIAEFIATLLFLYVTVATVI. At 60 to 69 the chain is on the extracellular side; the sequence is GHKKQTGPCD. The helical transmembrane segment at 70-90 threads the bilayer; that stretch reads GVGLLGIAWAFGGMIFVLVYC. At 91-118 the chain is on the cytoplasmic side; that stretch reads TAGISGGHINPAVTFGLFLARKVSLVRA. The short motif at 100-102 is the NPA 1 element; that stretch reads NPA. The helical transmembrane segment at 119 to 139 threads the bilayer; sequence LGYMIAQCLGAICGVGFVKAF. Topologically, residues 140–160 are extracellular; it reads MKTPYNTLGGGANTVADGYSK. The helical transmembrane segment at 161–181 threads the bilayer; that stretch reads GTALGAEIIGTFVLVYTVFSA. Topologically, residues 182 to 192 are cytoplasmic; the sequence is TDPKRSARDSH. The helical transmembrane segment at 193 to 213 threads the bilayer; the sequence is IPVLAPLPIGFAVFMVHLATI. At 214–242 the chain is on the extracellular side; sequence PITGTGINPARSFGAAVIYNNEKAWDDQW. Residues 221–223 carry the NPA 2 motif; the sequence is NPA. The chain crosses the membrane as a helical span at residues 243-263; it reads IFWVGPFLGALAAAAYHQYIL. The Cytoplasmic segment spans residues 264–280; the sequence is RASAIKALGSFRSNATN. 2 positions are modified to phosphoserine: Ser-273 and Ser-276. Residue Thr-279 is modified to Phosphothreonine.

It belongs to the MIP/aquaporin (TC 1.A.8) family. PIP (TC 1.A.8.11) subfamily. As to quaternary structure, interacts with SYP61 and SYP121 in trafficking vesicles and at the plasma membrane. In terms of tissue distribution, highly expressed in flowers, expressed at low levels in siliques, and at low level in leaves and roots. Highly levels in elongating cells in both roots and shoots.

The protein resides in the cell membrane. Water channel required to facilitate the transport of water across cell membrane. May be involved in the osmoregulation in plants under high osmotic stress such as under a high salt condition. This Arabidopsis thaliana (Mouse-ear cress) protein is Aquaporin PIP2-7.